We begin with the raw amino-acid sequence, 182 residues long: Ribosome maturation factor RimM (182 aa).

Residues 103–182 form the PRC barrel domain; it reads EGDYYWKDLM…SIEVDWDPGF (80 aa).

Belongs to the RimM family. Binds ribosomal protein uS19.

It localises to the cytoplasm. An accessory protein needed during the final step in the assembly of 30S ribosomal subunit, possibly for assembly of the head region. Essential for efficient processing of 16S rRNA. May be needed both before and after RbfA during the maturation of 16S rRNA. It has affinity for free ribosomal 30S subunits but not for 70S ribosomes. This is Ribosome maturation factor RimM from Escherichia coli O139:H28 (strain E24377A / ETEC).